Consider the following 447-residue polypeptide: Pup--protein ligase 2 (447 aa).

Glu4 serves as a coordination point for Mg(2+). Residue Arg48 coordinates ATP. A Mg(2+)-binding site is contributed by Tyr50. Asp52 acts as the Proton acceptor in catalysis. Glu58 lines the Mg(2+) pocket. ATP is bound by residues Thr61 and Trp414.

The protein belongs to the Pup ligase/Pup deamidase family. Pup-conjugating enzyme subfamily.

The catalysed reaction is ATP + [prokaryotic ubiquitin-like protein]-L-glutamate + [protein]-L-lysine = ADP + phosphate + N(6)-([prokaryotic ubiquitin-like protein]-gamma-L-glutamyl)-[protein]-L-lysine.. It functions in the pathway protein degradation; proteasomal Pup-dependent pathway. The protein operates within protein modification; protein pupylation. Functionally, catalyzes the covalent attachment of the prokaryotic ubiquitin-like protein modifier Pup to the proteasomal substrate proteins, thereby targeting them for proteasomal degradation. This tagging system is termed pupylation. The ligation reaction involves the side-chain carboxylate of the C-terminal glutamate of Pup and the side-chain amino group of a substrate lysine. The sequence is that of Pup--protein ligase 2 from Rhodococcus erythropolis (Arthrobacter picolinophilus).